The sequence spans 338 residues: LINE-1 retrotransposable element ORF1 protein (338 aa).

Residues M1 to D40 are disordered. Composition is skewed to polar residues over residues K8–A17 and S26–M35. The stretch at R49–V153 forms a coiled coil. Residues N157 to D252 form an RNA recognition motif (RRM) domain region. A C-terminal domain (CTD) region spans residues L253 to L317.

Belongs to the transposase 22 family. Homotrimer (via coiled coil domain). May also form larger homooligomers. May interact with DDX39A, HNRNPA1, SERBP1 and YBX1. Interacts with TEX19 and UBR2. Interacts with MOV10. Interacts with APOBEC3D; this interaction inhibits LINE-1 retrotransposition. In terms of processing, polyubiquitinated, probably by UBR2, which induces its degradation.

The protein localises to the nucleus. It is found in the nucleolus. The protein resides in the cytoplasm. Its subcellular location is the cytoplasmic ribonucleoprotein granule. It localises to the stress granule. In terms of biological role, nucleic acid-binding protein which is essential for retrotransposition of LINE-1 elements in the genome. Functions as a nucleic acid chaperone binding its own transcript and therefore preferentially mobilizing the transcript from which they are encoded. The sequence is that of LINE-1 retrotransposable element ORF1 protein (L1RE1) from Homo sapiens (Human).